The chain runs to 178 residues: Crossover junction endodeoxyribonuclease RuvC (178 aa).

Active-site residues include aspartate 14, glutamate 73, and aspartate 145. Mg(2+) is bound by residues aspartate 14, glutamate 73, and aspartate 145.

This sequence belongs to the RuvC family. In terms of assembly, homodimer which binds Holliday junction (HJ) DNA. The HJ becomes 2-fold symmetrical on binding to RuvC with unstacked arms; it has a different conformation from HJ DNA in complex with RuvA. In the full resolvosome a probable DNA-RuvA(4)-RuvB(12)-RuvC(2) complex forms which resolves the HJ. Requires Mg(2+) as cofactor.

Its subcellular location is the cytoplasm. The catalysed reaction is Endonucleolytic cleavage at a junction such as a reciprocal single-stranded crossover between two homologous DNA duplexes (Holliday junction).. In terms of biological role, the RuvA-RuvB-RuvC complex processes Holliday junction (HJ) DNA during genetic recombination and DNA repair. Endonuclease that resolves HJ intermediates. Cleaves cruciform DNA by making single-stranded nicks across the HJ at symmetrical positions within the homologous arms, yielding a 5'-phosphate and a 3'-hydroxyl group; requires a central core of homology in the junction. The consensus cleavage sequence is 5'-(A/T)TT(C/G)-3'. Cleavage occurs on the 3'-side of the TT dinucleotide at the point of strand exchange. HJ branch migration catalyzed by RuvA-RuvB allows RuvC to scan DNA until it finds its consensus sequence, where it cleaves and resolves the cruciform DNA. This Nitrosomonas eutropha (strain DSM 101675 / C91 / Nm57) protein is Crossover junction endodeoxyribonuclease RuvC.